Reading from the N-terminus, the 200-residue chain is Casparian strip membrane protein 1 (200 aa).

The Cytoplasmic portion of the chain corresponds to 1 to 38 (MSTTIEIPAESSAVAKGKAPLIGASSSSYEKKGGYKKG). A helical membrane pass occupies residues 39-59 (IAIFDFILRLGAVISALSAAA). The Extracellular portion of the chain corresponds to 60-88 (TMGTSDETLPFFTQFFQFEAGYDDFPTFQ). A helical membrane pass occupies residues 89–109 (FFVIAMGFVGGYLVLSLPFSV). Residues 110 to 121 (VAIIRPHAVGIR) are Cytoplasmic-facing. Residues 122-142 (LLLLILDTVALTLNTAAAAAA) traverse the membrane as a helical segment. The Extracellular portion of the chain corresponds to 143–175 (AAIVYLAHNGNQSANWLAVCQQFGDFCQKVSGG). N153 carries N-linked (GlcNAc...) asparagine glycosylation. The helical transmembrane segment at 176–196 (VVASFVSVLVFLLLVVMSAVA) threads the bilayer. Residues 197 to 200 (LRKH) are Cytoplasmic-facing.

The protein belongs to the Casparian strip membrane proteins (CASP) family. In terms of assembly, homodimer and heterodimers.

It localises to the cell membrane. Functionally, regulates membrane-cell wall junctions and localized cell wall deposition. Required for establishment of the Casparian strip membrane domain (CSD) and the subsequent formation of Casparian strips, a cell wall modification of the root endodermis that determines an apoplastic barrier between the intraorganismal apoplasm and the extraorganismal apoplasm and prevents lateral diffusion. The chain is Casparian strip membrane protein 1 from Ricinus communis (Castor bean).